We begin with the raw amino-acid sequence, 227 residues long: Cytidylate kinase (227 aa).

10–18 contacts ATP; the sequence is GPASSGKST.

This sequence belongs to the cytidylate kinase family. Type 1 subfamily.

Its subcellular location is the cytoplasm. It catalyses the reaction CMP + ATP = CDP + ADP. The enzyme catalyses dCMP + ATP = dCDP + ADP. The protein is Cytidylate kinase of Streptococcus agalactiae serotype Ia (strain ATCC 27591 / A909 / CDC SS700).